The primary structure comprises 343 residues: Heat-inducible transcription repressor HrcA (343 aa).

It belongs to the HrcA family.

Its function is as follows. Negative regulator of class I heat shock genes (grpE-dnaK-dnaJ and groELS operons). Prevents heat-shock induction of these operons. This Thermoanaerobacter pseudethanolicus (strain ATCC 33223 / 39E) (Clostridium thermohydrosulfuricum) protein is Heat-inducible transcription repressor HrcA.